The chain runs to 322 residues: UDP-galactose transporter homolog 1 (322 aa).

5 helical membrane-spanning segments follow: residues 4 to 24 (FMRQLFVCMIGIYGSFLSWAV), 43 to 63 (ALLSLAQSFMTVLCGLLWNWF), 76 to 96 (FLGYFSSIAISASLSSYFGYA), 105 to 125 (TVILGKSCKLLPVIALHVFVY), and 129 to 149 (FPPHKYLIVTMITAGVSIFSY). Residue N152 is glycosylated (N-linked (GlcNAc...) asparagine). 4 helical membrane passes run 164 to 184 (SPIGLLLLFFNLLMDGITNTT), 199 to 219 (MMIAVNLGIACLNGLYLISPF), 250 to 270 (LFIFFTLEKFGSITLVTITLT), and 290 to 310 (IQWLGILLVFLGISLEAGLKI). N-linked (GlcNAc...) asparagine glycans are attached at residues N313 and N314.

Belongs to the nucleotide-sugar transporter family. SLC35B subfamily.

It localises to the endoplasmic reticulum membrane. Functionally, may be involved in specific transport of UDP-Gal from the cytosol to the Golgi lumen. Involved in the maintenance of optimal conditions for the folding of secretory pathway proteins in the endoplasmic reticulum. The protein is UDP-galactose transporter homolog 1 (hut1) of Schizosaccharomyces pombe (strain 972 / ATCC 24843) (Fission yeast).